We begin with the raw amino-acid sequence, 358 residues long: Probable branched-chain-amino-acid aminotransferase (358 aa).

N6-(pyridoxal phosphate)lysine is present on lysine 196.

The protein belongs to the class-IV pyridoxal-phosphate-dependent aminotransferase family. The cofactor is pyridoxal 5'-phosphate.

It carries out the reaction L-leucine + 2-oxoglutarate = 4-methyl-2-oxopentanoate + L-glutamate. The catalysed reaction is L-isoleucine + 2-oxoglutarate = (S)-3-methyl-2-oxopentanoate + L-glutamate. It catalyses the reaction L-valine + 2-oxoglutarate = 3-methyl-2-oxobutanoate + L-glutamate. It participates in amino-acid biosynthesis; L-isoleucine biosynthesis; L-isoleucine from 2-oxobutanoate: step 4/4. It functions in the pathway amino-acid biosynthesis; L-leucine biosynthesis; L-leucine from 3-methyl-2-oxobutanoate: step 4/4. Its pathway is amino-acid biosynthesis; L-valine biosynthesis; L-valine from pyruvate: step 4/4. Acts on leucine, isoleucine and valine. This is Probable branched-chain-amino-acid aminotransferase (ilvE) from Staphylococcus epidermidis (strain ATCC 35984 / DSM 28319 / BCRC 17069 / CCUG 31568 / BM 3577 / RP62A).